Reading from the N-terminus, the 674-residue chain is Ribonuclease E (674 aa).

Residues 35 to 117 enclose the S1 motif domain; the sequence is GDIYLGLVDN…LTGNISMPGR (83 aa). 2 residues coordinate Mg(2+): aspartate 296 and aspartate 339. Residues cysteine 397 and cysteine 400 each coordinate Zn(2+). Disordered regions lie at residues 458 to 529 and 626 to 674; these read PLDL…RRVE and QPRE…SSAE. Composition is skewed to basic and acidic residues over residues 484–493 and 509–529; these read GSEFSEKENI and TKEK…RRVE. Over residues 663-674 the composition is skewed to basic residues; sequence RPGRRRRRSSAE. The short motif at 665 to 673 is the C4 Arg-rich motif, probably responsible for interaction with PNPase element; the sequence is GRRRRRSSA.

The protein belongs to the RNase E/G family. Fractionates in a 250-300 kDa region, which is too small to be the equivalent of an RNA degradosome, as occurs with E.coli RNase E. Interacts with polynucleotide phosphorylase (PNPase, pnp), probably via the C4 Arg-rich motif (residues 665-673). Requires Mg(2+) as cofactor.

It localises to the cytoplasm. The protein localises to the cell inner membrane. The catalysed reaction is Endonucleolytic cleavage of single-stranded RNA in A- and U-rich regions.. Functionally, endoribonuclease that plays a central role in rRNA processing and mRNA decay, and probably tRNA processing. Acts on 9S rRNA (the precursor of 5S rRNA) and RNAI, a molecule that controls the replication of ColE1 plasmid. Upon expression in E.coli does not purify with endogenous degradosome proteins. Prefers 5'-monophosphorylated substrates over 5'-triphosphorylated substrates. Complements an rne temperature-sensitive mutation in E.coli, despite being considerably shorter and not able to interact with the E.coli degradosome. Cleaves AU-rich sequences in vitro, tested with psbA2 mRNA. Complements both an rne temperature-sensitive mutation and an rng deletion in E.coli. Acts in the degradation of psaL mRNA in the presence but not the absence of the sRNA PsrR1. Cleaves the rimO-crhR transcript, contributing to the very short half-life of rimO mRNA. Its function is as follows. mRNA for psbA2, one of the core proteins in photosystem II, is degraded in the dark under control of a cis-acting AU-rich box in its 5'-UTR. RNase E cuts in this box, suggesting it is involved in this dark-induced mRNA instability. In terms of biological role, CRISPR (clustered regularly interspaced short palindromic repeat) is an adaptive immune system that provides protection against mobile genetic elements (viruses, transposable elements and conjugative plasmids). CRISPR clusters contain spacers, sequences complementary to antecedent mobile elements, and target invading nucleic acids. CRISPR clusters are transcribed and processed into CRISPR RNA (crRNA). Endogenous RNase E is required for correct processing of pre-crRNA for the CRISPR3 subtype III-B system in this genome (genes sll7080 to sll7095). This CRISPR3 system does not include a cas6 gene, which is the usual RNase involved in crRNA maturation. In Synechocystis sp. (strain ATCC 27184 / PCC 6803 / Kazusa), this protein is Ribonuclease E.